A 414-amino-acid chain; its full sequence is Glutathione gamma-glutamylcysteinyltransferase (414 aa).

The region spanning 37-256 is the Peptidase C83 domain; the sequence is QLKKSFYKRQ…GYVLLEPMHI (220 aa).

This sequence belongs to the phytochelatin synthase family.

It catalyses the reaction [Glu(-Cys)](n)-Gly + glutathione + H(+) = [Glu(-Cys)](n+1)-Gly + glycine. Functionally, required for detoxification of heavy metals such as cadmium and arsenate. The polypeptide is Glutathione gamma-glutamylcysteinyltransferase (Schizosaccharomyces pombe (strain 972 / ATCC 24843) (Fission yeast)).